The following is a 362-amino-acid chain: Phosphoserine aminotransferase (362 aa).

2 residues coordinate L-glutamate: serine 9 and arginine 42. Pyridoxal 5'-phosphate contacts are provided by residues 76-77 (GR), tryptophan 102, threonine 153, aspartate 174, and glutamine 197. At lysine 198 the chain carries N6-(pyridoxal phosphate)lysine. 239–240 (NT) serves as a coordination point for pyridoxal 5'-phosphate.

Belongs to the class-V pyridoxal-phosphate-dependent aminotransferase family. SerC subfamily. Homodimer. Pyridoxal 5'-phosphate serves as cofactor.

It is found in the cytoplasm. The enzyme catalyses O-phospho-L-serine + 2-oxoglutarate = 3-phosphooxypyruvate + L-glutamate. It carries out the reaction 4-(phosphooxy)-L-threonine + 2-oxoglutarate = (R)-3-hydroxy-2-oxo-4-phosphooxybutanoate + L-glutamate. Its pathway is amino-acid biosynthesis; L-serine biosynthesis; L-serine from 3-phospho-D-glycerate: step 2/3. The protein operates within cofactor biosynthesis; pyridoxine 5'-phosphate biosynthesis; pyridoxine 5'-phosphate from D-erythrose 4-phosphate: step 3/5. Functionally, catalyzes the reversible conversion of 3-phosphohydroxypyruvate to phosphoserine and of 3-hydroxy-2-oxo-4-phosphonooxybutanoate to phosphohydroxythreonine. This Escherichia fergusonii (strain ATCC 35469 / DSM 13698 / CCUG 18766 / IAM 14443 / JCM 21226 / LMG 7866 / NBRC 102419 / NCTC 12128 / CDC 0568-73) protein is Phosphoserine aminotransferase.